Reading from the N-terminus, the 393-residue chain is S-adenosylmethionine synthase (393 aa).

Histidine 16 serves as a coordination point for ATP. Mg(2+) is bound at residue aspartate 18. A K(+)-binding site is contributed by glutamate 44. Glutamate 57 and glutamine 100 together coordinate L-methionine. The interval 100–110 (QSNDIAQGVDH) is flexible loop. Residues 167-169 (DAK), 238-239 (RF), aspartate 247, 253-254 (RK), alanine 270, and lysine 274 contribute to the ATP site. Aspartate 247 serves as a coordination point for L-methionine. Residue lysine 278 participates in L-methionine binding.

This sequence belongs to the AdoMet synthase family. As to quaternary structure, homotetramer; dimer of dimers. The cofactor is Mg(2+). Requires K(+) as cofactor.

The protein resides in the cytoplasm. It carries out the reaction L-methionine + ATP + H2O = S-adenosyl-L-methionine + phosphate + diphosphate. It participates in amino-acid biosynthesis; S-adenosyl-L-methionine biosynthesis; S-adenosyl-L-methionine from L-methionine: step 1/1. Its function is as follows. Catalyzes the formation of S-adenosylmethionine (AdoMet) from methionine and ATP. The overall synthetic reaction is composed of two sequential steps, AdoMet formation and the subsequent tripolyphosphate hydrolysis which occurs prior to release of AdoMet from the enzyme. The sequence is that of S-adenosylmethionine synthase from Leptothrix cholodnii (strain ATCC 51168 / LMG 8142 / SP-6) (Leptothrix discophora (strain SP-6)).